Here is a 153-residue protein sequence, read N- to C-terminus: Arachidonate 5-lipoxygenase-activating protein (153 aa).

Residues 1–8 (MDQETVGN) are Lumenal-facing. The chain crosses the membrane as a helical span at residues 9 to 30 (VVLLAIVTLISVIQNGFFAHKV). At 31–52 (EHESKTQNGRSFQRTGTLAFER) the chain is on the cytoplasmic side. A helical membrane pass occupies residues 53-77 (VYTANQNCVDAYPTFLVMLWSAGLL). Topologically, residues 78 to 80 (CSQ) are lumenal. A helical membrane pass occupies residues 81 to 102 (VPAAFAGLMYLFVRQKYFVGYL). At 103 to 107 (GERRQ) the chain is on the cytoplasmic side. An intramembrane segment occupies 108 to 115 (STPGYIFG). The chain crosses the membrane as a helical span at residues 116–128 (KRIILFLFLMSLA). Topologically, residues 129–153 (GIFNYYLILFFGSDFENYIKTITTT) are lumenal.

It belongs to the MAPEG family. As to quaternary structure, homotrimer. Interacts with LTC4S and ALOX5.

The protein resides in the nucleus membrane. The protein localises to the endoplasmic reticulum membrane. In terms of biological role, required for leukotriene biosynthesis by ALOX5 (5-lipoxygenase). Anchors ALOX5 to the membrane. Binds arachidonic acid, and could play an essential role in the transfer of arachidonic acid to ALOX5. Binds to MK-886, a compound that blocks the biosynthesis of leukotrienes. The polypeptide is Arachidonate 5-lipoxygenase-activating protein (ALOX5AP) (Equus caballus (Horse)).